A 726-amino-acid chain; its full sequence is Transmembrane channel-like protein 8 (726 aa).

The Cytoplasmic segment spans residues 1 to 114 (MLLPRSVSSE…GIRSYFTFLR (114 aa)). Serine 6 carries the phosphoserine modification. A helical transmembrane segment spans residues 115 to 135 (FLLLLNLLSLLLTASFVLLPL). Residues 136–200 (VWLRPPDPGP…VGPESSSVYS (65 aa)) are Lumenal-facing. Asparagine 148 is a glycosylation site (N-linked (GlcNAc...) asparagine). The chain crosses the membrane as a helical span at residues 201–221 (IRLAYLLSPLACLLLCFCGTL). At 222–299 (RRMVKGLPQK…AQTACRLLSY (78 aa)) the chain is on the cytoplasmic side. The chain crosses the membrane as a helical span at residues 300 to 320 (LRVNVLNGLLVVGAISAIFWA). Topologically, residues 321–338 (TKYSQDNKEESLFLLLQY) are lumenal. The chain crosses the membrane as a helical span at residues 339–359 (LPPGVIALVNFLGPLLFTFLV). The Cytoplasmic portion of the chain corresponds to 360–426 (QLENYPPNTE…QCWENSVGEE (67 aa)). Positions 362 to 530 (ENYPPNTEVN…SSRPFRASSS (169 aa)) are TMC domain. The chain crosses the membrane as a helical span at residues 427-447 (LYKLSIFNFLLTVAFAFLVTL). Residues 448–488 (PRRLLVDRFSGRFWAWLEREEFLVPKNVLDIVAGQTVTWMG) are Lumenal-facing. The helical transmembrane segment at 489–509 (LFYCPLLPLLNSVFLFLTFYI) threads the bilayer. Residues 510-531 (KKYTLLKNSRASSRPFRASSST) lie on the Cytoplasmic side of the membrane. Residues 532–552 (FFFQLVLLLGLLLAAVPLGYV) form a helical membrane-spanning segment. At 553 to 594 (VSSIHSSWDCGLFTNYSAPWQVVPELVALGLPPIGQRALHYL) the chain is on the lumenal side. Asparagine 567 is a glycosylation site (N-linked (GlcNAc...) asparagine). A helical membrane pass occupies residues 595 to 615 (GSHAFSFPLLIMLSLVLTVCV). Residues 616 to 726 (SQTQANARAI…RFRFPSGAEL (111 aa)) are Cytoplasmic-facing. The interval 651–726 (PEPGPSDSPG…RFRFPSGAEL (76 aa)) is disordered. Pro residues predominate over residues 652–662 (EPGPSDSPGPK). Phosphoserine is present on residues serine 658 and serine 673.

Belongs to the TMC family. Interacts with TMC6. Interacts and forms a complex with TMC6 and CIB1; the interaction stabilizes each component of the complex. Interacts and forms a complex with TMC6 and SLC30A1/ZNT1; the interaction regulates zinc transport into the ER. Interacts with TRADD; the interaction competes with TRADD/RIPK1/TRAF2/cIAPs complex I formation and facilites complex II formation. In terms of assembly, (Microbial infection) Interacts with human papillomavirus 16/HPV16 protein E5; the interaction alleviates TMC8-mediated transcription factors inhibition. As to expression, expressed in placenta, prostate and testis.

It localises to the endoplasmic reticulum membrane. The protein localises to the golgi apparatus membrane. Its subcellular location is the nucleus membrane. Its function is as follows. Acts as a regulatory protein involved in the regulation of numerous cellular processes. Together with its homolog TMC6/EVER1, forms a complex with calcium-binding protein CIB1 in lymphocytes and keratynocytes where TMC6 and TMC8 stabilize CIB1 levels and reciprocally. Together with TMC6, also forms a complex with and activates zinc transporter ZNT1 at the ER membrane of keratynocytes, thereby facilitating zinc uptake into the ER. Also inhibits receptor-mediated calcium release from ER stores and calcium activated and volume regulated chloride channels. Down-regulates the activity of transcription factors induced by zinc and cytokines. Also sequesters TRADD which impairs the recruitment of TRAF2 and RIPK1 in the pro-survival complex I and promotes proapoptotic complex II formation, and may therefore be involved in TNF-induced cell death/survival decisions. The chain is Transmembrane channel-like protein 8 from Homo sapiens (Human).